We begin with the raw amino-acid sequence, 264 residues long: Hydroxyethylthiazole kinase (264 aa).

M52 contacts substrate. ATP-binding residues include R127 and T173. G200 provides a ligand contact to substrate.

The protein belongs to the Thz kinase family. The cofactor is Mg(2+).

The enzyme catalyses 5-(2-hydroxyethyl)-4-methylthiazole + ATP = 4-methyl-5-(2-phosphooxyethyl)-thiazole + ADP + H(+). It functions in the pathway cofactor biosynthesis; thiamine diphosphate biosynthesis; 4-methyl-5-(2-phosphoethyl)-thiazole from 5-(2-hydroxyethyl)-4-methylthiazole: step 1/1. Functionally, catalyzes the phosphorylation of the hydroxyl group of 4-methyl-5-beta-hydroxyethylthiazole (THZ). This Serratia proteamaculans (strain 568) protein is Hydroxyethylthiazole kinase.